The following is a 235-amino-acid chain: Phosphoribosylaminoimidazole-succinocarboxamide synthase (235 aa).

The protein belongs to the SAICAR synthetase family.

The catalysed reaction is 5-amino-1-(5-phospho-D-ribosyl)imidazole-4-carboxylate + L-aspartate + ATP = (2S)-2-[5-amino-1-(5-phospho-beta-D-ribosyl)imidazole-4-carboxamido]succinate + ADP + phosphate + 2 H(+). Its pathway is purine metabolism; IMP biosynthesis via de novo pathway; 5-amino-1-(5-phospho-D-ribosyl)imidazole-4-carboxamide from 5-amino-1-(5-phospho-D-ribosyl)imidazole-4-carboxylate: step 1/2. The protein is Phosphoribosylaminoimidazole-succinocarboxamide synthase of Lachnoclostridium phytofermentans (strain ATCC 700394 / DSM 18823 / ISDg) (Clostridium phytofermentans).